The sequence spans 189 residues: dCTP deaminase, dUMP-forming (189 aa).

DCTP contacts are provided by residues 101-106 (KSSLGR), Asp119, 127-129 (TLE), Gln148, Tyr162, and Gln174. The active-site Proton donor/acceptor is the Glu129.

The protein belongs to the dCTP deaminase family. As to quaternary structure, homotrimer.

The catalysed reaction is dCTP + 2 H2O = dUMP + NH4(+) + diphosphate. The protein operates within pyrimidine metabolism; dUMP biosynthesis; dUMP from dCTP: step 1/1. Its function is as follows. Bifunctional enzyme that catalyzes both the deamination of dCTP to dUTP and the hydrolysis of dUTP to dUMP without releasing the toxic dUTP intermediate. The polypeptide is dCTP deaminase, dUMP-forming (Rhodococcus jostii (strain RHA1)).